A 428-amino-acid chain; its full sequence is Probable methanogen homoaconitase large subunit (428 aa).

Residues cysteine 304, cysteine 364, and cysteine 367 each contribute to the [4Fe-4S] cluster site.

It belongs to the aconitase/IPM isomerase family. LeuC type 2 subfamily. In terms of assembly, heterotetramer of 2 HacA and 2 HacB proteins.

It catalyses the reaction (2R)-homocitrate = (2R,3S)-homoisocitrate. The enzyme catalyses (2R)-homocitrate = cis-homoaconitate + H2O. The catalysed reaction is (2R,3S)-homoisocitrate = cis-homoaconitate + H2O. It carries out the reaction cis-(homo)2aconitate + H2O = (2R,3S)-iso(homo)2citrate. It catalyses the reaction cis-(homo)3aconitate + H2O = (2R,3S)-iso(homo)3citrate. Its pathway is organic acid metabolism; 2-oxosuberate biosynthesis. Component of a hydro-lyase with broad substrate specificity for cis-unsaturated tricarboxylic acids. Catalyzes both the reversible dehydration of (R)-homocitrate ((R)-2-hydroxybutane-1,2,4-tricarboxylate) to produce cis-homoaconitate ((Z)-but-1-ene-1,2,4-tricarboxylate), and its hydration to homoisocitrate ((1R,2S)-1-hydroxybutane-1,2,4-tricarboxylate). Is also able to hydrate the analogous longer chain substrates cis-homo(2)-aconitate, cis-homo(3)-aconitate. These reactions are part of the biosynthesis pathway of coenzyme B. The polypeptide is Probable methanogen homoaconitase large subunit (hacA) (Methanothermobacter thermautotrophicus (strain ATCC 29096 / DSM 1053 / JCM 10044 / NBRC 100330 / Delta H) (Methanobacterium thermoautotrophicum)).